We begin with the raw amino-acid sequence, 428 residues long: Protein clpf-1 (428 aa).

Residues glutamate 16, arginine 56, and 124-129 each bind ATP; that span reads DVGKTT.

Belongs to the Clp1 family. Clp1 subfamily.

The protein localises to the nucleus. Required for endonucleolytic cleavage during polyadenylation-dependent pre-mRNA 3'-end formation. The sequence is that of Protein clpf-1 from Caenorhabditis elegans.